A 181-amino-acid polypeptide reads, in one-letter code: Adenine phosphoribosyltransferase (181 aa).

Belongs to the purine/pyrimidine phosphoribosyltransferase family. As to quaternary structure, homodimer.

It localises to the cytoplasm. The enzyme catalyses AMP + diphosphate = 5-phospho-alpha-D-ribose 1-diphosphate + adenine. It participates in purine metabolism; AMP biosynthesis via salvage pathway; AMP from adenine: step 1/1. In terms of biological role, catalyzes a salvage reaction resulting in the formation of AMP, that is energically less costly than de novo synthesis. The protein is Adenine phosphoribosyltransferase of Acidobacterium capsulatum (strain ATCC 51196 / DSM 11244 / BCRC 80197 / JCM 7670 / NBRC 15755 / NCIMB 13165 / 161).